The primary structure comprises 337 residues: Formamidase (337 aa).

The CN hydrolase domain maps to 14 to 257; that stretch reads VVIGLVQLQL…DEIITAEVRP (244 aa). The active-site Proton acceptor is Glu60. Catalysis depends on Lys129, which acts as the Proton donor. Cys162 acts as the Nucleophile in catalysis.

Belongs to the carbon-nitrogen hydrolase superfamily. Aliphatic amidase family.

It catalyses the reaction formamide + H2O = formate + NH4(+). Is an aliphatic amidase with a restricted substrate specificity, as it only hydrolyzes formamide. This Bradyrhizobium diazoefficiens (strain JCM 10833 / BCRC 13528 / IAM 13628 / NBRC 14792 / USDA 110) protein is Formamidase.